The primary structure comprises 938 residues: Isoleucine--tRNA ligase (938 aa).

The 'HIGH' region motif lies at 58-68 (PYANGSIHIGH). Lysine 183 carries the post-translational modification N6-acetyllysine. Glutamate 561 contacts L-isoleucyl-5'-AMP. The short motif at 602–606 (KMSKS) is the 'KMSKS' region element. ATP is bound at residue lysine 605. Zn(2+) contacts are provided by cysteine 901, cysteine 904, cysteine 921, and cysteine 924.

Belongs to the class-I aminoacyl-tRNA synthetase family. IleS type 1 subfamily. As to quaternary structure, monomer. Zn(2+) is required as a cofactor.

It is found in the cytoplasm. The enzyme catalyses tRNA(Ile) + L-isoleucine + ATP = L-isoleucyl-tRNA(Ile) + AMP + diphosphate. Functionally, catalyzes the attachment of isoleucine to tRNA(Ile). As IleRS can inadvertently accommodate and process structurally similar amino acids such as valine, to avoid such errors it has two additional distinct tRNA(Ile)-dependent editing activities. One activity is designated as 'pretransfer' editing and involves the hydrolysis of activated Val-AMP. The other activity is designated 'posttransfer' editing and involves deacylation of mischarged Val-tRNA(Ile). The chain is Isoleucine--tRNA ligase from Escherichia coli O45:K1 (strain S88 / ExPEC).